The chain runs to 392 residues: Homoserine O-acetyltransferase (392 aa).

The AB hydrolase-1 domain maps to 52 to 356 (NVVVVLHALT…ICGHDGFLVE (305 aa)). Residue S157 is the Nucleophile of the active site. Substrate is bound at residue R227. Catalysis depends on residues D320 and H350. Residue D351 coordinates substrate. The tract at residues 373 to 392 (SQSAGPGGAGPGSRKGTTRR) is disordered.

Belongs to the AB hydrolase superfamily. MetX family. In terms of assembly, homodimer.

It localises to the cytoplasm. It catalyses the reaction L-homoserine + acetyl-CoA = O-acetyl-L-homoserine + CoA. It functions in the pathway amino-acid biosynthesis; L-methionine biosynthesis via de novo pathway; O-acetyl-L-homoserine from L-homoserine: step 1/1. In terms of biological role, transfers an acetyl group from acetyl-CoA to L-homoserine, forming acetyl-L-homoserine. This is Homoserine O-acetyltransferase from Mycolicibacterium paratuberculosis (strain ATCC BAA-968 / K-10) (Mycobacterium paratuberculosis).